Here is a 118-residue protein sequence, read N- to C-terminus: Non-specific lipid-transfer protein 2A (118 aa).

The signal sequence occupies residues 1-26 (MARAQLVLVALVAAALLLAGPHTTMA). Intrachain disulfides connect C30-C77, C40-C54, C55-C100, and C75-C114.

Belongs to the plant LTP family.

Its function is as follows. Plant non-specific lipid-transfer proteins transfer phospholipids as well as galactolipids across membranes. May play a role in wax or cutin deposition in the cell walls of expanding epidermal cells and certain secretory tissues. The chain is Non-specific lipid-transfer protein 2A (LTP2-A) from Oryza sativa subsp. japonica (Rice).